The sequence spans 406 residues: Argininosuccinate synthase (406 aa).

Residues 11-19 (AYSGGLDTS) and Ala38 contribute to the ATP site. L-citrulline contacts are provided by Tyr91 and Ser96. Gly121 contacts ATP. Residues Thr123, Asn127, and Asp128 each coordinate L-aspartate. Position 127 (Asn127) interacts with L-citrulline. 5 residues coordinate L-citrulline: Arg131, Ser181, Ser190, Glu266, and Tyr278.

It belongs to the argininosuccinate synthase family. Type 1 subfamily. In terms of assembly, homotetramer.

Its subcellular location is the cytoplasm. It carries out the reaction L-citrulline + L-aspartate + ATP = 2-(N(omega)-L-arginino)succinate + AMP + diphosphate + H(+). The protein operates within amino-acid biosynthesis; L-arginine biosynthesis; L-arginine from L-ornithine and carbamoyl phosphate: step 2/3. This chain is Argininosuccinate synthase, found in Campylobacter hominis (strain ATCC BAA-381 / DSM 21671 / CCUG 45161 / LMG 19568 / NCTC 13146 / CH001A).